A 205-amino-acid polypeptide reads, in one-letter code: Holliday junction branch migration complex subunit RuvA (205 aa).

Positions 1 to 64 are domain I; the sequence is MIGKLKGLID…EDQIKLFGFR (64 aa). Residues 65–143 are domain II; it reads SDLEREWFRL…AFASVDPAVV (79 aa). The segment at 144–153 is flexible linker; sequence ALSGALDERS. The interval 153 to 205 is domain III; sequence SAPRPVTDAISALVNLGYGQPQAAAAIASASRSAGEGAETAQLIKLGLKELSK.

It belongs to the RuvA family. In terms of assembly, homotetramer. Forms an RuvA(8)-RuvB(12)-Holliday junction (HJ) complex. HJ DNA is sandwiched between 2 RuvA tetramers; dsDNA enters through RuvA and exits via RuvB. An RuvB hexamer assembles on each DNA strand where it exits the tetramer. Each RuvB hexamer is contacted by two RuvA subunits (via domain III) on 2 adjacent RuvB subunits; this complex drives branch migration. In the full resolvosome a probable DNA-RuvA(4)-RuvB(12)-RuvC(2) complex forms which resolves the HJ.

The protein localises to the cytoplasm. Functionally, the RuvA-RuvB-RuvC complex processes Holliday junction (HJ) DNA during genetic recombination and DNA repair, while the RuvA-RuvB complex plays an important role in the rescue of blocked DNA replication forks via replication fork reversal (RFR). RuvA specifically binds to HJ cruciform DNA, conferring on it an open structure. The RuvB hexamer acts as an ATP-dependent pump, pulling dsDNA into and through the RuvAB complex. HJ branch migration allows RuvC to scan DNA until it finds its consensus sequence, where it cleaves and resolves the cruciform DNA. The sequence is that of Holliday junction branch migration complex subunit RuvA from Rhodopseudomonas palustris (strain BisB18).